The sequence spans 89 residues: Arminin 7519 (89 aa).

A signal peptide spans 1 to 18; the sequence is MRSTFAVLFLALIALTYS. A propeptide spanning residues 19–59 is cleaved from the precursor; sequence KNYQDVKEEIKNEVENEILRDLGEDDDELDDNAQEAVNDAR. Residue A86 is modified to Alanine amide.

The protein belongs to the arminin family. Expressed in entodermal epithelium along the body column.

It is found in the secreted. It localises to the target cell membrane. In terms of biological role, antimicrobial peptide with a broad-spectrum antimicrobial activity. Keeps its antibacterial activity under a wide range of salt concentrations that mimic physiological conditions of human blood, which is surprising, since Hydra is an obligate freshwater animal with nearly no salt tolerance. Does not affect red blood cells. The polypeptide is Arminin 7519 (Hydra vulgaris (Hydra)).